Reading from the N-terminus, the 347-residue chain is NADH-ubiquinone oxidoreductase chain 2 (347 aa).

10 consecutive transmembrane segments (helical) span residues 13–33, 59–79, 96–116, 122–142, 144–164, 178–200, 210–232, 246–266, 276–296, and 326–346; these read IVLGTMIVMTSSHWLMIWMGF, YFLTQATASMLLMLAIIINLV, IIMTVALAMKMGLAPFHFWVP, ISLLSGLILLTWQKLAPLSVL, VISPIINLDLLLTMSILSILI, ILAYSSIAHMGWMTSILIFNPMM, LMTATTFTLFMTTSTTTTLALSH, IIMLSLGGLPPLVGFLPKWMI, IILATLMAITALLNLFFYMRL, and LPMLIVLSTMTLPLAPAMILL.

It belongs to the complex I subunit 2 family. Core subunit of respiratory chain NADH dehydrogenase (Complex I) which is composed of 45 different subunits. Interacts with TMEM242.

Its subcellular location is the mitochondrion inner membrane. It carries out the reaction a ubiquinone + NADH + 5 H(+)(in) = a ubiquinol + NAD(+) + 4 H(+)(out). Core subunit of the mitochondrial membrane respiratory chain NADH dehydrogenase (Complex I) which catalyzes electron transfer from NADH through the respiratory chain, using ubiquinone as an electron acceptor. Essential for the catalytic activity and assembly of complex I. This is NADH-ubiquinone oxidoreductase chain 2 from Rhynchonycteris naso (Brazilian long-nosed bat).